A 486-amino-acid polypeptide reads, in one-letter code: MITTEIKRVKNHINGEWVESTGTEVEAVPNPATGKIIAYVPLSPKEDVEKAVEAAKAAYETWSKVPVPNRSRQLYKYLQLLQENKEELAKIITLENGKTLTDATGEVQRGIEAVELATSTPNLMMGQALPNIASGIDGSIWRYPIGVVAGITPFNFPMMIPLWMFPLAIACGNTFVLKTSERTPLLAERLVELFYEAGFPKGVLNLVQGGKDVVNSILENKDIQAVSFVGSEPVARYVYETGTKHGKRVQALAGAKNHAIVMPDCNLEKTVQGVIGSAFASSGERCMACSVVAVVDEIADEFIDVLVAETKKLKVGDGFHEDNYVGPLIRESHKERVLGYINSGVADGATLLVDGRKIKEEVGEGYFVGATIFDGVNQEMKIWQDEIFAPVLSIVRVKDLEEGIKLTNQSKFANGAVIYTSSGKHAQTFRDNIDAGMIGVNVNVPAPMAFFAFAGNKASFFGDLGTNGTDGVQFYTRKKVVTERWF.

NAD(+)-binding residues include Phe154, Lys178, Glu181, Arg182, and Ser231. The active-site Nucleophile is Cys286. Residue Glu386 participates in NAD(+) binding.

The protein belongs to the aldehyde dehydrogenase family. IolA subfamily. Homotetramer.

The catalysed reaction is 3-oxopropanoate + NAD(+) + CoA + H2O = hydrogencarbonate + acetyl-CoA + NADH + H(+). It catalyses the reaction 2-methyl-3-oxopropanoate + NAD(+) + CoA + H2O = propanoyl-CoA + hydrogencarbonate + NADH + H(+). Its pathway is polyol metabolism; myo-inositol degradation into acetyl-CoA; acetyl-CoA from myo-inositol: step 7/7. Catalyzes the oxidation of malonate semialdehyde (MSA) and methylmalonate semialdehyde (MMSA) into acetyl-CoA and propanoyl-CoA, respectively. Is involved in a myo-inositol catabolic pathway. Bicarbonate, and not CO2, is the end-product of the enzymatic reaction. This is Malonate-semialdehyde dehydrogenase from Bacillus cereus (strain AH187).